The chain runs to 302 residues: Dioxygenase olcK (302 aa).

The Fe cation site is built by His136, Asp138, and His213.

It belongs to the PhyH family. Homodimer. Requires Fe cation as cofactor.

It is found in the peroxisome matrix. It participates in secondary metabolite biosynthesis; terpenoid biosynthesis. In terms of biological role, dioxygenase; part of the gene cluster that mediates the biosynthesis of 15-deoxyoxalicine B. The first step of the pathway is the synthesis of nicotinyl-CoA from nicotinic acid by the nicotinic acid-CoA ligase olcI. Nicotinyl-CoA is then a substrate of polyketide synthase olcA to produce 4-hydroxy-6-(3-pyridinyl)-2H-pyran-2-one (HPPO) which is further prenylated by the polyprenyl transferase olcH to yield geranylgeranyl-HPPO. Geranylgeranyl pyrophosphate is provided by the cluster-specific geranylgeranyl pyrophosphate synthase olcC. The FAD-dependent monooxygenase olcE catalyzes the epoxidation of geranylgeranyl-HPPO and the terpene cyclase olcD catalyzes the cyclization of the terpenoid component, resulting in the formation of the tricyclic terpene moiety seen in predecaturin E. The cytochrome P450 monooxygenase then catalyzes the allylic oxidation of predecaturin E, which is followed by spirocylization with concomitant loss of one molecule of water to form decaturin E. Decaturin E is the substrate of the cytochrome P450 monooxygenase olcJ which hydroxylates it at the C-29 position to form decaturin F. The short-chain dehydrogenase/reductase olcF may catalyze the oxidation of decaturin F to generate the 29-hydroxyl-27-one intermediate, and subsequent hemiacetal formation probably leads to the formation of decaturin C. The dioxygenase olcK may be a peroxisomal enzyme that catalyzes the hydroxylation of decaturin C into decaturin A once decaturin C is shuttled into the peroxisome by the MFS transporter olcL. Finally the cytochrome P450 monooxygenase olcB catalyzes the oxidative rearrangement to yield 15-deoxyoxalicine B. In the absence of olcJ, decaturin E may be shunted to a pathway in which it is oxidized to a ketone, possibly by olcF, to form decaturin D, which undergoes further allylic oxidation to yield decaturin G. Moreover, in the absence of oclK or oclL, oclB can convert decaturin C into 15-deoxyoxalicine A. This chain is Dioxygenase olcK, found in Penicillium canescens.